We begin with the raw amino-acid sequence, 472 residues long: N-succinylglutamate 5-semialdehyde dehydrogenase 1 (472 aa).

Residue glycine 209–glycine 214 participates in NAD(+) binding. Catalysis depends on residues glutamate 232 and cysteine 266.

Belongs to the aldehyde dehydrogenase family. AstD subfamily.

The catalysed reaction is N-succinyl-L-glutamate 5-semialdehyde + NAD(+) + H2O = N-succinyl-L-glutamate + NADH + 2 H(+). It functions in the pathway amino-acid degradation; L-arginine degradation via AST pathway; L-glutamate and succinate from L-arginine: step 4/5. Functionally, catalyzes the NAD-dependent reduction of succinylglutamate semialdehyde into succinylglutamate. In Caulobacter vibrioides (strain ATCC 19089 / CIP 103742 / CB 15) (Caulobacter crescentus), this protein is N-succinylglutamate 5-semialdehyde dehydrogenase 1.